The chain runs to 495 residues: uncharacterized protein (495 aa).

A compositionally biased stretch (low complexity) spans 305-317 (DYNNNNNENYSGS). The tract at residues 305–404 (DYNNNNNENY…LDEEDNRKNK (100 aa)) is disordered. Positions 335 to 347 (YDNDENNDDENND) are enriched in acidic residues. The span at 348-363 (ENNNNNNNNNNNNNNN) shows a compositional bias: low complexity. Residues 386-398 (SDDDEADNELDEE) show a composition bias toward acidic residues.

This is an uncharacterized protein from Dictyostelium discoideum (Social amoeba).